The following is a 633-amino-acid chain: Leucine-rich repeat and IQ domain-containing protein 3 (633 aa).

LRR repeat units lie at residues 51–72, 73–94, and 98–119; these read SLRVCIFSNNFVTDIQPLQGCK, KLIKLDLHGNQIKTLPDRTFWN, and NLKLLYLHDNGFAKLKNICVLS. In terms of domain architecture, LRRCT spans 132 to 179; it reads CPVSLKKGYRHVLVNSIWPLKALDHHVISDEEIIQNWHLPERFKTFSQ. An IQ domain is found at 215-244; the sequence is HNSPVLIIQRWIRGFIVRKHLSPYFTRKRH. Residues 322-343 are disordered; sequence NSKQPRHHIQKGQNEMKSDSED. A coiled-coil region spans residues 556–616; sequence EKREKRKYKQ…AKVEFINTYY (61 aa).

The chain is Leucine-rich repeat and IQ domain-containing protein 3 (Lrriq3) from Rattus norvegicus (Rat).